An 893-amino-acid chain; its full sequence is Serine/threonine-protein kinase/endoribonuclease IRE1 (893 aa).

The N-terminal stretch at 1–19 (MRSLRRVLLQLVLLAGVAF) is a signal peptide. The Lumenal segment spans residues 20 to 379 (RGVRFDDAAD…NSVTKFSYRW (360 aa)). N-linked (GlcNAc...) asparagine glycosylation is found at Asn-105, Asn-158, Asn-259, and Asn-351. Residues 380–397 (LFPTFLMLLIMACLVKLA) traverse the membrane as a helical segment. The Cytoplasmic portion of the chain corresponds to 398 to 893 (DASKYCRQFV…FSKYFLGSSA (496 aa)). The disordered stretch occupies residues 451-478 (ASDKEGNGTGGSTEAQSNKAHDSTNVEL). A Protein kinase domain is found at 491 to 759 (CVYSKEIGKG…AVYVMHHPFF (269 aa)). ATP contacts are provided by residues 497–505 (IGKGSNGTV) and Lys-519. The Proton acceptor role is filled by Asp-625. In terms of domain architecture, KEN spans 762–890 (PELCLSFLRD…EEAFSKYFLG (129 aa)).

It belongs to the protein kinase superfamily. Ser/Thr protein kinase family. In terms of assembly, homodimer; disulfide-linked. Dimer formation is driven by hydrophobic interactions within the N-terminal luminal domains and stabilized by disulfide bridges. Post-translationally, autophosphorylated. Expressed in roots, nodes, internodes, leaf sheaths, leaf blades, young ears and mature ears.

The protein resides in the endoplasmic reticulum membrane. The catalysed reaction is L-seryl-[protein] + ATP = O-phospho-L-seryl-[protein] + ADP + H(+). It carries out the reaction L-threonyl-[protein] + ATP = O-phospho-L-threonyl-[protein] + ADP + H(+). In terms of biological role, involved in endoplasmic reticulum (ER) stress response. Senses unfolded proteins in the lumen of the ER via its N-terminal domain which leads to enzyme auto-activation. The active endoribonuclease domain splices bZIP50 mRNA to generate a new C-terminus, converting it into a potent unfolded-protein response (UPR) transcriptional activator, which then induces transcription of UPR target genes, such as luminal-binding protein (BiP) chaperones. This Oryza sativa subsp. japonica (Rice) protein is Serine/threonine-protein kinase/endoribonuclease IRE1.